Reading from the N-terminus, the 389-residue chain is GTPase Obg (389 aa).

The Obg domain maps to 1–159 (MKFVDEAVIR…RSLKLELMLL (159 aa)). Residues 122-144 (FHGLGNTRFKSSTNRAPRQKTLG) are disordered. One can recognise an OBG-type G domain in the interval 160–333 (ADVGLLGMPN…LSLKLIDFIE (174 aa)). Residues 166–173 (GMPNAGKS), 191–195 (FTTLV), 213–216 (DIPG), 283–286 (NKTD), and 314–316 (SAY) each bind GTP. Mg(2+) is bound by residues serine 173 and threonine 193.

The protein belongs to the TRAFAC class OBG-HflX-like GTPase superfamily. OBG GTPase family. Monomer. Requires Mg(2+) as cofactor.

It localises to the cytoplasm. Its function is as follows. An essential GTPase which binds GTP, GDP and possibly (p)ppGpp with moderate affinity, with high nucleotide exchange rates and a fairly low GTP hydrolysis rate. Plays a role in control of the cell cycle, stress response, ribosome biogenesis and in those bacteria that undergo differentiation, in morphogenesis control. The sequence is that of GTPase Obg from Shewanella woodyi (strain ATCC 51908 / MS32).